A 643-amino-acid chain; its full sequence is Protein ecdysoneless homolog (643 aa).

Disordered regions lie at residues 428-458 and 501-600; these read EFYN…NNFD and IESM…FTPV. Positions 446–456 are enriched in polar residues; that stretch reads AGSSSDANMNN. Acidic residues predominate over residues 528–543; it reads MDFDDVEDDSEGEESN. Over residues 564–580 the composition is skewed to polar residues; sequence NSTLEKSFENVNQQHSS. A compositionally biased stretch (basic and acidic residues) spans 581-592; that stretch reads KQNEESSKTRDE.

This sequence belongs to the ECD family.

The polypeptide is Protein ecdysoneless homolog (Arabidopsis thaliana (Mouse-ear cress)).